Consider the following 72-residue polypeptide: Translation initiation factor IF-1 (72 aa).

Residues 1 to 72 (MAREDLIEVE…SRGRITYRKK (72 aa)) enclose the S1-like domain.

Belongs to the IF-1 family. Component of the 30S ribosomal translation pre-initiation complex which assembles on the 30S ribosome in the order IF-2 and IF-3, IF-1 and N-formylmethionyl-tRNA(fMet); mRNA recruitment can occur at any time during PIC assembly.

The protein localises to the cytoplasm. In terms of biological role, one of the essential components for the initiation of protein synthesis. Stabilizes the binding of IF-2 and IF-3 on the 30S subunit to which N-formylmethionyl-tRNA(fMet) subsequently binds. Helps modulate mRNA selection, yielding the 30S pre-initiation complex (PIC). Upon addition of the 50S ribosomal subunit IF-1, IF-2 and IF-3 are released leaving the mature 70S translation initiation complex. The polypeptide is Translation initiation factor IF-1 (Acholeplasma laidlawii (strain PG-8A)).